Consider the following 405-residue polypeptide: Farnesyl pyrophosphate synthase (405 aa).

Residues D158 and D162 each coordinate Mg(2+). The DDXXD motif signature appears at 158 to 162 (DDLAD).

This sequence belongs to the FPP/GGPP synthase family. Mg(2+) serves as cofactor.

The catalysed reaction is isopentenyl diphosphate + (2E)-geranyl diphosphate = (2E,6E)-farnesyl diphosphate + diphosphate. It participates in pheromone biosynthesis. In terms of biological role, farnesyl pyrophosphate synthase involved in murgantiol biosynthesis, a male-released aggregation pheromone, by catalyzing the formation of (2E,6E)-farnesyl diphosphate. The sequence is that of Farnesyl pyrophosphate synthase from Murgantia histrionica (Harlequin bug).